The following is a 238-amino-acid chain: Octanoyltransferase (238 aa).

The region spanning 44-224 (AGGPDSLLLL…AVLDALDGRI (181 aa)) is the BPL/LPL catalytic domain. Substrate is bound by residues 82–89 (RGGKITWH), 154–156 (AIG), and 167–169 (GFA). The active-site Acyl-thioester intermediate is Cys-185.

The protein belongs to the LipB family.

It is found in the cytoplasm. It catalyses the reaction octanoyl-[ACP] + L-lysyl-[protein] = N(6)-octanoyl-L-lysyl-[protein] + holo-[ACP] + H(+). It functions in the pathway protein modification; protein lipoylation via endogenous pathway; protein N(6)-(lipoyl)lysine from octanoyl-[acyl-carrier-protein]: step 1/2. Functionally, catalyzes the transfer of endogenously produced octanoic acid from octanoyl-acyl-carrier-protein onto the lipoyl domains of lipoate-dependent enzymes. Lipoyl-ACP can also act as a substrate although octanoyl-ACP is likely to be the physiological substrate. The protein is Octanoyltransferase of Mycolicibacterium gilvum (strain PYR-GCK) (Mycobacterium gilvum (strain PYR-GCK)).